Here is a 387-residue protein sequence, read N- to C-terminus: Alpha-sarcoglycan (387 aa).

A signal peptide spans 1-23; sequence MAAAVTWIPLLAGLLAGLRDTKA. Residues 24–293 are Extracellular-facing; that stretch reads QQTTLHLLVG…RDFLTDALVT (270 aa). 2 N-linked (GlcNAc...) asparagine glycosylation sites follow: asparagine 174 and asparagine 246. Residues 294–314 traverse the membrane as a helical segment; sequence LLVPLLVALLLTLLLAYIMCF. The Cytoplasmic portion of the chain corresponds to 315–387; sequence RREGRLKRDM…AQMPLILDQH (73 aa). Position 377 is a phosphoserine (serine 377).

This sequence belongs to the sarcoglycan alpha/epsilon family. As to quaternary structure, cross-link to form 2 major subcomplexes: one consisting of SGCB, SGCD and SGCG and the other consisting of SGCB and SGCD. The association between SGCB and SGCG is particularly strong while SGCA is loosely associated with the other sarcoglycans. Interacts with the syntrophin SNTA1. In terms of tissue distribution, striated muscle, both skeletal and cardiac.

The protein localises to the cell membrane. It is found in the sarcolemma. The protein resides in the cytoplasm. It localises to the cytoskeleton. Component of the sarcoglycan complex, a subcomplex of the dystrophin-glycoprotein complex which forms a link between the F-actin cytoskeleton and the extracellular matrix. In Mus musculus (Mouse), this protein is Alpha-sarcoglycan (Sgca).